We begin with the raw amino-acid sequence, 174 residues long: Shikimate kinase 2 (174 aa).

12-17 (GCGKTT) is an ATP binding site. 2 residues coordinate Mg(2+): T16 and D32. Residues D34, R58, and G79 each contribute to the substrate site. Positions 112-126 (QAAPEEDLRPTLTGK) are LID domain. An ATP-binding site is contributed by R120. R139 is a substrate binding site.

The protein belongs to the shikimate kinase family. AroL subfamily. In terms of assembly, monomer. The cofactor is Mg(2+).

The protein resides in the cytoplasm. It carries out the reaction shikimate + ATP = 3-phosphoshikimate + ADP + H(+). It functions in the pathway metabolic intermediate biosynthesis; chorismate biosynthesis; chorismate from D-erythrose 4-phosphate and phosphoenolpyruvate: step 5/7. Catalyzes the specific phosphorylation of the 3-hydroxyl group of shikimic acid using ATP as a cosubstrate. This is Shikimate kinase 2 from Escherichia coli O81 (strain ED1a).